We begin with the raw amino-acid sequence, 185 residues long: Large ribosomal subunit protein uL13 (185 aa).

It belongs to the universal ribosomal protein uL13 family. Part of the 50S ribosomal subunit.

In terms of biological role, this protein is one of the early assembly proteins of the 50S ribosomal subunit, although it is not seen to bind rRNA by itself. It is important during the early stages of 50S assembly. This Pyrobaculum islandicum (strain DSM 4184 / JCM 9189 / GEO3) protein is Large ribosomal subunit protein uL13.